The chain runs to 988 residues: Protein SEMI-ROLLED LEAF 2 (988 aa).

Positions 844 to 865 (SVDGGLHESPITNTGSSISKTT) are disordered. A compositionally biased stretch (polar residues) spans 853-865 (PITNTGSSISKTT).

Expressed in root tips, and in the vascular bundles of leaf blades, leaf sheaths, and roots, especially in their sclerenchymatous cells.

The protein localises to the nucleus. Its subcellular location is the cytoplasm. In terms of biological role, functions in regulating leaf rolling through abaxial side leaf cell differentiation. May be involved in the transdifferentiation process from mesophyll cells to sclerenchymatous cells. The chain is Protein SEMI-ROLLED LEAF 2 from Oryza sativa subsp. japonica (Rice).